The chain runs to 1343 residues: DNA-directed RNA polymerase subunit beta (1343 aa).

This sequence belongs to the RNA polymerase beta chain family. In terms of assembly, the RNAP catalytic core consists of 2 alpha, 1 beta, 1 beta' and 1 omega subunit. When a sigma factor is associated with the core the holoenzyme is formed, which can initiate transcription.

It carries out the reaction RNA(n) + a ribonucleoside 5'-triphosphate = RNA(n+1) + diphosphate. In terms of biological role, DNA-dependent RNA polymerase catalyzes the transcription of DNA into RNA using the four ribonucleoside triphosphates as substrates. The chain is DNA-directed RNA polymerase subunit beta from Shewanella baltica (strain OS223).